The following is a 213-amino-acid chain: Maleamate amidohydrolase (213 aa).

Catalysis depends on C154, which acts as the Nucleophile.

It belongs to the isochorismatase family.

It carries out the reaction maleamate + H2O = maleate + NH4(+). It functions in the pathway cofactor degradation; nicotinate degradation. Its function is as follows. Maleamate amidase that transforms maleamate into maleate and ammonia in the aerobic nicotinate degradation pathway. This is Maleamate amidohydrolase (nicF) from Pseudomonas putida (strain ATCC 47054 / DSM 6125 / CFBP 8728 / NCIMB 11950 / KT2440).